Reading from the N-terminus, the 90-residue chain is UPF0335 protein RPB_1426 (90 aa).

It belongs to the UPF0335 family.

This chain is UPF0335 protein RPB_1426, found in Rhodopseudomonas palustris (strain HaA2).